A 447-amino-acid chain; its full sequence is Serine/threonine-protein phosphatase 2A 55 kDa regulatory subunit B delta isoform (447 aa).

7 WD repeats span residues 26–65 (AEADIISTVEFNYSGELLATGDKGGRVVIFQREQESKNRP), 91–132 (EIEE…KRAE), 175–213 (AHTYHINSISVNSDYETYLSADDLRINLWHLEITDRSFN), 224–264 (ELTE…LCDR), 283–321 (EIISSISDVKFSHSGRYMMTRDYLSVKVWDLNMENRPVE), 338–379 (ENDC…DITL), and 414–447 (DFNKKILHTAWHPKENVIAVAATNNLYIFQDKMN).

The protein belongs to the phosphatase 2A regulatory subunit B family. In terms of assembly, PP2A consists of a common heterodimeric core enzyme, composed of a 36 kDa catalytic subunit (subunit C) and a 65 kDa constant regulatory subunit (PR65 or subunit A), that associates with a variety of regulatory subunits.

The protein localises to the cytoplasm. Substrate-recognition subunit of protein phosphatase 2A (PP2A) that plays a key role in cell cycle by controlling mitosis entry and exit. The activity of PP2A complexes containing PPP2R2D (PR55-delta) fluctuate during the cell cycle: the activity is high in interphase and low in mitosis. The polypeptide is Serine/threonine-protein phosphatase 2A 55 kDa regulatory subunit B delta isoform (ppp2r2d) (Danio rerio (Zebrafish)).